The sequence spans 99 residues: Transposase InsE for insertion sequence IS3A (99 aa).

Residues 1–21 (MTKTVSTSKKPRKQHSPEFRS) form a disordered region.

The protein belongs to the transposase 8 family.

Involved in the transposition of the insertion sequence IS3. In Escherichia coli (strain K12), this protein is Transposase InsE for insertion sequence IS3A (insE1).